A 474-amino-acid polypeptide reads, in one-letter code: PRAME family member 8 (474 aa).

The LRR 1; degenerate repeat unit spans residues 97 to 122; the sequence is QSKLQVLDLRNVDENFCDIFSGATAS. Residues 177–201 form an LRR 2; degenerate repeat; sequence HVCCKELQVFGMPIHSIIEVLNMVE. The LRR 3; degenerate repeat unit spans residues 202-228; it reads LDCIQEVEVCCPWELSTLVKFAPYLGQ. One copy of the LRR 4; degenerate repeat lies at 229–264; that stretch reads MRNLRKLVLFNIRASACIPPDNKGQFIARFTSQFLK. 5 LRR repeats span residues 265-290, 291-322, 323-341, 347-374, and 375-399; these read LDYF…LRCL, QASL…RQLK, ELDL…PLTG, VATL…VLSR, and CSQL…LLRH.

This sequence belongs to the PRAME family.

The protein is PRAME family member 8 of Homo sapiens (Human).